A 466-amino-acid polypeptide reads, in one-letter code: 23S rRNA (uracil(1939)-C(5))-methyltransferase RlmD (466 aa).

The 59-residue stretch at Lys-11–Lys-69 folds into the TRAM domain. [4Fe-4S] cluster-binding residues include Cys-82, Cys-88, Cys-91, and Cys-184. Residues Gln-287, Phe-316, Asn-321, Glu-337, Asn-364, and Asp-385 each coordinate S-adenosyl-L-methionine. Catalysis depends on Cys-411, which acts as the Nucleophile.

Belongs to the class I-like SAM-binding methyltransferase superfamily. RNA M5U methyltransferase family. RlmD subfamily.

The enzyme catalyses uridine(1939) in 23S rRNA + S-adenosyl-L-methionine = 5-methyluridine(1939) in 23S rRNA + S-adenosyl-L-homocysteine + H(+). Catalyzes the formation of 5-methyl-uridine at position 1939 (m5U1939) in 23S rRNA. This Photobacterium profundum (strain SS9) protein is 23S rRNA (uracil(1939)-C(5))-methyltransferase RlmD.